Here is a 331-residue protein sequence, read N- to C-terminus: Endo-1,4-beta-xylanase 2 (331 aa).

An N-terminal signal peptide occupies residues 1-17; it reads MKASSVLLGLAPLAALA. The GH10 domain occupies 31-329; it reads QQSIDALMKA…KPAYNSVVQA (299 aa). N-linked (GlcNAc...) asparagine glycosylation is present at Asn-105. Glu-159 serves as the catalytic Proton donor. Glu-266 acts as the Nucleophile in catalysis. The cysteines at positions 284 and 290 are disulfide-linked. Residue Asn-301 is glycosylated (N-linked (GlcNAc...) asparagine).

Belongs to the glycosyl hydrolase 10 (cellulase F) family.

Its subcellular location is the secreted. It carries out the reaction Endohydrolysis of (1-&gt;4)-beta-D-xylosidic linkages in xylans.. Its pathway is glycan degradation; xylan degradation. Its function is as follows. Endo-1,4-beta-xylanase involved in the hydrolysis of xylan, a major structural heterogeneous polysaccharide found in plant biomass representing the second most abundant polysaccharide in the biosphere, after cellulose. Accounts for approximately 70 percent of the endoxylanase activity in the culture filtrate. This is Endo-1,4-beta-xylanase 2 (XYL2) from Pyricularia grisea (Crabgrass-specific blast fungus).